The chain runs to 319 residues: Coiled-coil domain-containing protein 149 (319 aa).

Coiled-coil stretches lie at residues 1–199 (MANQ…RKNS) and 259–286 (IQHQRQTNKILGNRVAELEKKLRTLEVS). The chain crosses the membrane as a helical span at residues 298–318 (VSIGFGSMFFLKYLCLWLIAV).

This sequence belongs to the CCDC149 family.

The protein localises to the membrane. The protein is Coiled-coil domain-containing protein 149 (CCDC149) of Bos taurus (Bovine).